Here is a 363-residue protein sequence, read N- to C-terminus: MLSNISAGENSEVEKIVVKCSKSGMHNYIFITIPIIYSTIFVVGVFGNSLVVIVIYSYMKMKTMASVFLMNLALSDLCFVITLPLWAVYTAMHYHWPFGDLLCKIASTAITLNLYTTVFLLTCLSIDRYSAIVHPMKSRIRRTVMVARLTCVGIWLVAFLASLPSVIYRQIFIFPDTNQTVCALVYHSGHIYFMVGMSLVKNIVGFFIPFVIILTSYTLIGKTLKEVYRAQRARNDDIFKMIVAVVLLFFFCWIPHQVFTFLDVLIQMDVIQNCKMYDIVDTGMPITICIAYFNSCLNPFLYGFFGKKFRKHFLQLIKYIPPKMRTHASVNTKSSTVSQRLSDTKCASNKIALWIFDIEEHCK.

The Extracellular segment spans residues 1-27; sequence MLSNISAGENSEVEKIVVKCSKSGMHN. N-linked (GlcNAc...) asparagine glycosylation is present at N4. Disulfide bonds link C20–C274 and C103–C182. The chain crosses the membrane as a helical span at residues 28-57; sequence YIFITIPIIYSTIFVVGVFGNSLVVIVIYS. Over 58–63 the chain is Cytoplasmic; sequence YMKMKT. Residues 64–91 traverse the membrane as a helical segment; the sequence is MASVFLMNLALSDLCFVITLPLWAVYTA. Over 92-100 the chain is Extracellular; sequence MHYHWPFGD. A helical membrane pass occupies residues 101-127; the sequence is LLCKIASTAITLNLYTTVFLLTCLSID. Topologically, residues 128 to 143 are cytoplasmic; the sequence is RYSAIVHPMKSRIRRT. Residues 144–167 form a helical membrane-spanning segment; it reads VMVARLTCVGIWLVAFLASLPSVI. Residues 168 to 192 lie on the Extracellular side of the membrane; the sequence is YRQIFIFPDTNQTVCALVYHSGHIY. R169 lines the angiotensin II pocket. An N-linked (GlcNAc...) asparagine glycan is attached at N178. Y186 and K201 together coordinate angiotensin II. Residues 193–218 form a helical membrane-spanning segment; that stretch reads FMVGMSLVKNIVGFFIPFVIILTSYT. Residues 219–239 are Cytoplasmic-facing; it reads LIGKTLKEVYRAQRARNDDIF. The chain crosses the membrane as a helical span at residues 240–268; the sequence is KMIVAVVLLFFFCWIPHQVFTFLDVLIQM. Residues 269–278 are Extracellular-facing; sequence DVIQNCKMYD. A helical membrane pass occupies residues 279 to 304; the sequence is IVDTGMPITICIAYFNSCLNPFLYGF. At 305–363 the chain is on the cytoplasmic side; it reads FGKKFRKHFLQLIKYIPPKMRTHASVNTKSSTVSQRLSDTKCASNKIALWIFDIEEHCK. Residues C346 and C362 are each lipidated (S-palmitoyl cysteine).

It belongs to the G-protein coupled receptor 1 family. C-terminal Ser or Thr residues may be phosphorylated. As to expression, heart membranes, follicular oocytes.

The protein localises to the cell membrane. Its function is as follows. Receptor for angiotensin II, a vasoconstricting peptide, which acts as a key regulator of blood pressure and sodium retention by the kidney. The activated receptor in turn couples to G-alpha proteins G(q) (GNAQ, GNA11, GNA14 or GNA15) and thus activates phospholipase C and increases the cytosolic Ca(2+) concentrations, which in turn triggers cellular responses such as stimulation of protein kinase C. The chain is Type-1 angiotensin II receptor B (agtr1-b) from Xenopus laevis (African clawed frog).